We begin with the raw amino-acid sequence, 126 residues long: Large-conductance mechanosensitive channel (126 aa).

The next 2 membrane-spanning stretches (helical) occupy residues 17–37 and 70–90; these read VDLA…SSFI and GLFL…FLII.

This sequence belongs to the MscL family. As to quaternary structure, homopentamer.

The protein localises to the cell inner membrane. Functionally, channel that opens in response to stretch forces in the membrane lipid bilayer. May participate in the regulation of osmotic pressure changes within the cell. The protein is Large-conductance mechanosensitive channel of Flavobacterium johnsoniae (strain ATCC 17061 / DSM 2064 / JCM 8514 / BCRC 14874 / CCUG 350202 / NBRC 14942 / NCIMB 11054 / UW101) (Cytophaga johnsonae).